The following is a 147-amino-acid chain: UPF0735 ACT domain-containing protein YszB (147 aa).

The ACT domain occupies 70 to 145 (TLFFHLEDRS…FVEKVEILGS (76 aa)).

This sequence belongs to the UPF0735 family.

This chain is UPF0735 ACT domain-containing protein YszB (yszB), found in Bacillus subtilis (strain 168).